The primary structure comprises 35 residues: MWRDSLCTAAGYALGRRDAAALSSLLSEAAAMMEV.

As to quaternary structure, interacts with lactate dehydrogenases LDHA and LDHB; interaction with mitochondrial LDH leads to inhibition of lactate dehydrogenase activity, preventing conversion of lactate to pyruvate. As to expression, detected in brain, kidney and liver (at protein level).

Its subcellular location is the mitochondrion. Inhibits lactate dehydrogenase (LDH)-mediated conversion of lactate to pyruvate in mitochondria by competing with mitochondrial LDH for binding to NAD(+). Also inhibits cellular lactate utilization. This Mus musculus (Mouse) protein is PTEN upstream open reading frame MP31.